A 347-amino-acid polypeptide reads, in one-letter code: S-adenosylmethionine:tRNA ribosyltransferase-isomerase (347 aa).

This sequence belongs to the QueA family. In terms of assembly, monomer.

It is found in the cytoplasm. The catalysed reaction is 7-aminomethyl-7-carbaguanosine(34) in tRNA + S-adenosyl-L-methionine = epoxyqueuosine(34) in tRNA + adenine + L-methionine + 2 H(+). Its pathway is tRNA modification; tRNA-queuosine biosynthesis. Transfers and isomerizes the ribose moiety from AdoMet to the 7-aminomethyl group of 7-deazaguanine (preQ1-tRNA) to give epoxyqueuosine (oQ-tRNA). The sequence is that of S-adenosylmethionine:tRNA ribosyltransferase-isomerase from Erythrobacter litoralis (strain HTCC2594).